Reading from the N-terminus, the 436-residue chain is Chorion-specific transcription factor GCMa (436 aa).

Positions 14-169 (LSWDINDVKL…KLEAEARRAM (156 aa)) form a DNA-binding region, GCM. Positions 76, 82, 86, 113, 116, 125, 152, and 154 each coordinate Zn(2+). The tract at residues 171–202 (KVNTAPSSVSLSLKGSTETRSLPGETQSQGSL) is disordered. Residues 174-202 (TAPSSVSLSLKGSTETRSLPGETQSQGSL) show a composition bias toward polar residues.

In terms of processing, polyubiquitinated in the presence of UBE2D2 and FBXW2 (in vitro). In terms of tissue distribution, highly expressed in the placenta. Expressed in trophoblast cells of the villi.

It is found in the nucleus. Transcription factor involved in the control of expression of placental growth factor (PGF) and other placenta-specific genes. Binds to the trophoblast-specific element 2 (TSE2) of the aromatase gene enhancer. Binds to the SYDE1 promoter. Has a central role in mediating the differentiation of trophoblast cells along both the villous and extravillous pathways in placental development. This Homo sapiens (Human) protein is Chorion-specific transcription factor GCMa (GCM1).